A 276-amino-acid polypeptide reads, in one-letter code: MLIHPQFDPVAIHIGPLAIRWYGLMYLAGFIMFLWFGRLRIRQPHMAARGWAARDLDDMLFFGVMGVILGGRLGYVLFYKPSYYLTHPLEIFKVWEGGMAFHGGFLGVLVAMWLFARLRQRHWLEVTDFIAPMIPCGLAAGRIGNFINGELWGRPTDLPWGMIFPQAGDNIPRHPSQLYQFAGEGVALFIILWLFARKPRPMGAVSGVFLIGYGGFRFAAEFAREPDSFLGLLAMHLSMGQWLSLPMILIGIAMVVWAYRRQARSGEERPVTDSGA.

Transmembrane regions (helical) follow at residues 17-37 (LAIRWYGLMYLAGFIMFLWFG), 59-79 (MLFFGVMGVILGGRLGYVLFY), 95-115 (WEGGMAFHGGFLGVLVAMWLF), 129-149 (FIAPMIPCGLAAGRIGNFING), 176-196 (SQLYQFAGEGVALFIILWLFA), 202-222 (MGAVSGVFLIGYGGFRFAAEF), and 237-257 (LSMGQWLSLPMILIGIAMVVW). Position 142 (Arg-142) interacts with a 1,2-diacyl-sn-glycero-3-phospho-(1'-sn-glycerol).

It belongs to the Lgt family.

The protein resides in the cell inner membrane. The enzyme catalyses L-cysteinyl-[prolipoprotein] + a 1,2-diacyl-sn-glycero-3-phospho-(1'-sn-glycerol) = an S-1,2-diacyl-sn-glyceryl-L-cysteinyl-[prolipoprotein] + sn-glycerol 1-phosphate + H(+). It functions in the pathway protein modification; lipoprotein biosynthesis (diacylglyceryl transfer). Functionally, catalyzes the transfer of the diacylglyceryl group from phosphatidylglycerol to the sulfhydryl group of the N-terminal cysteine of a prolipoprotein, the first step in the formation of mature lipoproteins. This is Phosphatidylglycerol--prolipoprotein diacylglyceryl transferase from Cupriavidus pinatubonensis (strain JMP 134 / LMG 1197) (Cupriavidus necator (strain JMP 134)).